Here is a 594-residue protein sequence, read N- to C-terminus: Beta-fructofuranosidase, insoluble isoenzyme CWINV3 (594 aa).

An N-terminal signal peptide occupies residues 1–28 (MAKLNRSNIGLSLLLSMFLANFITDLEA). Substrate-binding positions include 50–53 (WMND), Gln69, Trp77, and 113–114 (WS). Asp53 is a catalytic residue. The N-linked (GlcNAc...) asparagine glycan is linked to Asn147. 179 to 180 (RD) contacts substrate. N-linked (GlcNAc...) asparagine glycosylation occurs at Asn217. Glu235 contributes to the substrate binding site. N-linked (GlcNAc...) asparagine glycosylation is found at Asn297 and Asn329. The cysteines at positions 428 and 480 are disulfide-linked.

This sequence belongs to the glycosyl hydrolase 32 family. As to expression, expressed in seedlings, leaves, flowers, and seeds.

The protein resides in the secreted. The protein localises to the extracellular space. It localises to the apoplast. It is found in the cell wall. The enzyme catalyses Hydrolysis of terminal, non-reducing (2-&gt;1)- and (2-&gt;6)-linked beta-D-fructofuranose residues in fructans.. In terms of biological role, 6-fructan exohydrolase that can use phlein, levan, neokestose, levanbiose, 6-kestose, and 1-kestose as substrates. The chain is Beta-fructofuranosidase, insoluble isoenzyme CWINV3 (CWINV3) from Arabidopsis thaliana (Mouse-ear cress).